Reading from the N-terminus, the 417-residue chain is Serine hydroxymethyltransferase 1 (417 aa).

Residues leucine 121 and glycine 125–leucine 127 contribute to the (6S)-5,6,7,8-tetrahydrofolate site. Residue lysine 229 is modified to N6-(pyridoxal phosphate)lysine. Serine 354 to phenylalanine 356 contacts (6S)-5,6,7,8-tetrahydrofolate.

The protein belongs to the SHMT family. As to quaternary structure, homodimer. Requires pyridoxal 5'-phosphate as cofactor.

It localises to the cytoplasm. It carries out the reaction (6R)-5,10-methylene-5,6,7,8-tetrahydrofolate + glycine + H2O = (6S)-5,6,7,8-tetrahydrofolate + L-serine. The protein operates within one-carbon metabolism; tetrahydrofolate interconversion. Its pathway is amino-acid biosynthesis; glycine biosynthesis; glycine from L-serine: step 1/1. Its function is as follows. Catalyzes the reversible interconversion of serine and glycine with tetrahydrofolate (THF) serving as the one-carbon carrier. This reaction serves as the major source of one-carbon groups required for the biosynthesis of purines, thymidylate, methionine, and other important biomolecules. Also exhibits THF-independent aldolase activity toward beta-hydroxyamino acids, producing glycine and aldehydes, via a retro-aldol mechanism. The protein is Serine hydroxymethyltransferase 1 of Pseudomonas syringae pv. syringae (strain B728a).